Here is a 475-residue protein sequence, read N- to C-terminus: Aspartyl/glutamyl-tRNA(Asn/Gln) amidotransferase subunit B (475 aa).

It belongs to the GatB/GatE family. GatB subfamily. In terms of assembly, heterotrimer of A, B and C subunits.

It carries out the reaction L-glutamyl-tRNA(Gln) + L-glutamine + ATP + H2O = L-glutaminyl-tRNA(Gln) + L-glutamate + ADP + phosphate + H(+). The catalysed reaction is L-aspartyl-tRNA(Asn) + L-glutamine + ATP + H2O = L-asparaginyl-tRNA(Asn) + L-glutamate + ADP + phosphate + 2 H(+). Its function is as follows. Allows the formation of correctly charged Asn-tRNA(Asn) or Gln-tRNA(Gln) through the transamidation of misacylated Asp-tRNA(Asn) or Glu-tRNA(Gln) in organisms which lack either or both of asparaginyl-tRNA or glutaminyl-tRNA synthetases. The reaction takes place in the presence of glutamine and ATP through an activated phospho-Asp-tRNA(Asn) or phospho-Glu-tRNA(Gln). In Bacillus cereus (strain B4264), this protein is Aspartyl/glutamyl-tRNA(Asn/Gln) amidotransferase subunit B.